We begin with the raw amino-acid sequence, 110 residues long: UPF0060 membrane protein BPSL1340 (110 aa).

Transmembrane regions (helical) follow at residues 9 to 29 (ALFV…WLVL), 34 to 54 (PAWL…LLTL), 64 to 84 (AAYG…VDGV), and 86 to 106 (LSRW…VIAL).

The protein belongs to the UPF0060 family.

It localises to the cell inner membrane. The polypeptide is UPF0060 membrane protein BPSL1340 (Burkholderia pseudomallei (strain K96243)).